The primary structure comprises 74 residues: UPF0248 protein MK0350 (74 aa).

It belongs to the UPF0248 family.

The sequence is that of UPF0248 protein MK0350 from Methanopyrus kandleri (strain AV19 / DSM 6324 / JCM 9639 / NBRC 100938).